The chain runs to 1856 residues: Zinc metalloprotease ZmpC (1856 aa).

The N-terminal stretch at 1–42 (MSRKSIGEKRHSFSMRKLSVGLVSVTVSSFFLMSQGIQSVSA) is a signal peptide. The propeptide occupies 43–95 (DNMESPIHYKYMTEGKLTDEEKSLLVEALPQLAEESDDTYYLVYRSQQFLPNT). An LPXTG sorting signal motif is present at residues 92–96 (LPNTG). A Pentaglycyl murein peptidoglycan amidated threonine modification is found at Thr-95. Transmembrane regions (helical) follow at residues 97–117 (FNPT…VLLV) and 130–152 (FLLL…TSQI). Over 153 to 1856 (LSAYNSQLSI…TDDFRNSIYK (1704 aa)) the chain is Extracellular. Composition is skewed to polar residues over residues 254–267 (NLSS…QVEQ) and 286–295 (NPVSATTVQS). Residues 254–362 (NLSSNDSFAS…GEAAVREEEP (109 aa)) form a disordered region. 2 stretches are compositionally biased toward basic and acidic residues: residues 322–334 (PGHE…REDL) and 351–361 (HEGEAAVREEE). Residues 417-496 (ALEVTTRNRT…NEVVKVGTLV (80 aa)) form the G5 domain. A Zn(2+)-binding site is contributed by His-1502. The active site involves Glu-1503. Zn(2+) contacts are provided by His-1506 and Glu-1526.

The protein belongs to the peptidase M26 family. Zn(2+) serves as cofactor. Post-translationally, the Gram-positive cell-wall anchor motif LPXTG is located in the N-terminal part, in contrast to such motifs in other known streptococcal and staphylococcal proteins. The protease could be cleaved by the sortase and anchored in the membrane via the two potential N-terminal transmembrane domains, whereas the propeptide located prior to the LPXTG motif would remain attached to the cell wall peptidoglycan by an amide bond.

It localises to the secreted. The protein localises to the cell wall. The protein resides in the membrane. Zinc metalloproteinase that specifically cleaves human matrix metalloproteinase 9 (MMP-9), leading to its activation. May play a role in pneumococcal virulence and pathogenicity in the lung. In Streptococcus pneumoniae serotype 4 (strain ATCC BAA-334 / TIGR4), this protein is Zinc metalloprotease ZmpC (zmpC).